We begin with the raw amino-acid sequence, 212 residues long: Glycerol-3-phosphate acyltransferase (212 aa).

The next 5 helical transmembrane spans lie at phenylalanine 10–valine 30, glycine 90–phenylalanine 110, phenylalanine 124–valine 144, leucine 150–isoleucine 170, and tryptophan 171–arginine 191.

This sequence belongs to the PlsY family. In terms of assembly, probably interacts with PlsX.

The protein localises to the cell inner membrane. The catalysed reaction is an acyl phosphate + sn-glycerol 3-phosphate = a 1-acyl-sn-glycero-3-phosphate + phosphate. The protein operates within lipid metabolism; phospholipid metabolism. In terms of biological role, catalyzes the transfer of an acyl group from acyl-phosphate (acyl-PO(4)) to glycerol-3-phosphate (G3P) to form lysophosphatidic acid (LPA). This enzyme utilizes acyl-phosphate as fatty acyl donor, but not acyl-CoA or acyl-ACP. The polypeptide is Glycerol-3-phosphate acyltransferase (Bordetella avium (strain 197N)).